A 66-amino-acid chain; its full sequence is Putative membrane protein insertion efficiency factor (66 aa).

This sequence belongs to the UPF0161 family.

The protein localises to the cell inner membrane. Could be involved in insertion of integral membrane proteins into the membrane. The protein is Putative membrane protein insertion efficiency factor of Parasynechococcus marenigrum (strain WH8102).